The following is a 222-amino-acid chain: Collectrin (222 aa).

A signal peptide spans 1–14; that stretch reads MLWALFFLVTTIHA. Residues 15-141 are Extracellular-facing; the sequence is ELCHPDAENA…LAPPMEPSVP (127 aa). The Collectrin-like domain occupies 21–222; the sequence is AENAFKVRLS…LTEDERLTPL (202 aa). Asn76 and Asn93 each carry an N-linked (GlcNAc...) asparagine glycan. Residues 142–162 form a helical membrane-spanning segment; it reads VWIIVFGVIFCIVTVAIALLV. Residues 163–222 are Cytoplasmic-facing; that stretch reads LSGIRQRRRNNKGPPGVEDAEDKCENIITIENGIPCDPLDMKGGHINDGFLTEDERLTPL. A phosphothreonine mark is found at Thr214 and Thr220.

The protein belongs to the CLTRN family. As to quaternary structure, monomer. Homodimer. Homodimer; dimerization prevents CLTRN cleavage by BACE2. Interacts with SNAPIN. Interacts with SLC6A18; this interaction regulates the trafficking of SLC6A18 to the cell membrane and its amino acid transporter activity. Interacts with SLC6A19; this interaction regulates the trafficking of SLC6A19 to the cell membrane and its amino acid transporter activity. Interacts with SLC6A20B. Post-translationally, glycosylated. Glycosylation is required for plasma membrane localization and for its cleavage by BACE2. Proteolytically processed in pancreatic beta cells by BACE2 leading to the generation and extracellular release of soluble CLTRN, and a corresponding cell-associated C-terminal fragment which is later cleaved by gamma-secretase. This shedding process inactivates CLTRN. Three cleavage sites have been identified for BACE2, two clustered sites after Phe-116 and Leu-118 and a more membrane proximal site at Phe-125; the preferred BACE2 cleavage site seems to be between Phe-125 and Leu-126, Phe-116 and Leu-118 act as alternative sites. As to expression, expressed on the apical surface of the proximal tubules in the renal cortex (at protein level). Kidney; collecting ducts and proximal tubule. Pancreas; beta cells of islets. Expressed in the cerebral cortex, hippocampus, brainstem and cerebellum.

It is found in the cell membrane. Plays an important role in amino acid transport by acting as binding partner of amino acid transporters SLC6A18 and SLC6A19, regulating their trafficking on the cell surface and their activity. May also play a role in trafficking of amino acid transporters SLC3A1 and SLC7A9 to the renal cortical cell membrane. Regulator of SNARE complex function. Stimulator of beta cell replication. The chain is Collectrin from Mus musculus (Mouse).